The primary structure comprises 170 residues: MDLKQYITIVPDFPKPGIMFKDITTLMDNGPAYKYATDQIVQYAREKQIEIVVGPEARGFIIGCPVAYALGVGFAPVRKEGKLPREVVRVEYGLEYGTDVLTMHKDAIKPGQRVLITDDLLATGGTMRATIDLVEQLGGVVAGLAFLIELTELGGRKKLEGYDILTLMQF.

Belongs to the purine/pyrimidine phosphoribosyltransferase family. In terms of assembly, homodimer.

It is found in the cytoplasm. It catalyses the reaction AMP + diphosphate = 5-phospho-alpha-D-ribose 1-diphosphate + adenine. Its pathway is purine metabolism; AMP biosynthesis via salvage pathway; AMP from adenine: step 1/1. Functionally, catalyzes a salvage reaction resulting in the formation of AMP, that is energically less costly than de novo synthesis. This is Adenine phosphoribosyltransferase from Geobacillus kaustophilus (strain HTA426).